The sequence spans 247 residues: uncharacterized protein (247 aa).

It belongs to the AIM2 family.

It localises to the cytoplasm. The protein resides in the nucleus. This is an uncharacterized protein from Schizosaccharomyces pombe (strain 972 / ATCC 24843) (Fission yeast).